The following is a 769-amino-acid chain: Gephyrin (769 aa).

The tract at residues 14-153 is MPT Mo-transferase; sequence QIRVGVLTVS…LPGSKKGSQE (140 aa). The segment at 140 to 349 is interaction with GABARAP; the sequence is LIINLPGSKK…VDITKVARRH (210 aa). Disordered stretches follow at residues 181–232 and 260–299; these read DELE…DSSS and TASL…SKGV. The segment covering 187–199 has biased composition (pro residues); that stretch reads PSPPPPLSPPPTT. A phosphoserine mark is found at serine 188 and serine 194. Threonine 198 carries the post-translational modification Phosphothreonine. Residue serine 200 is modified to Phosphoserine. Cysteine 212 is lipidated: S-palmitoyl cysteine. Residues 261 to 286 show a composition bias toward polar residues; it reads ASLSTTPSESPRAQATSRLSTASCPT. Serine 262 is subject to Phosphoserine. Phosphothreonine occurs at positions 265 and 266. A phosphoserine mark is found at serine 268 and serine 270. Cysteine 284 carries the S-palmitoyl cysteine lipid modification. An MPT adenylyltransferase region spans residues 327 to 769; sequence SSKENILRAS…VVDVMVIGRL (443 aa). Serine 338 carries the post-translational modification Phosphoserine.

It in the N-terminal section; belongs to the MoaB/Mog family. The protein in the C-terminal section; belongs to the MoeA family. In terms of assembly, homotrimer, homodimer and homooligomer. Interacts with SRGAP2 (via SH3 domain). Interacts with GLRB. Interacts with GABARAP. Interacts with GABRA3. GABRA3 and GLRB occupy overlapping binding sites. Interacts with ARHGAP32; IQSEC3, INSYN1 and INSYN2A. It depends on Mg(2+) as a cofactor. Post-translationally, palmitoylated. Palmitoylation is stimulated by GABA type A receptors activity. Palmitoylation by ZDHHC12 regulates clustering at synapses.

Its subcellular location is the postsynaptic cell membrane. The protein resides in the cell membrane. It localises to the cytoplasm. The protein localises to the cytosol. It is found in the cytoskeleton. Its subcellular location is the cell projection. The protein resides in the dendrite. It localises to the postsynaptic density. It catalyses the reaction molybdopterin + ATP + H(+) = adenylyl-molybdopterin + diphosphate. The enzyme catalyses adenylyl-molybdopterin + molybdate = Mo-molybdopterin + AMP + H(+). It functions in the pathway cofactor biosynthesis; molybdopterin biosynthesis. With respect to regulation, inhibited by copper and tungsten. Functionally, microtubule-associated protein involved in membrane protein-cytoskeleton interactions. It is thought to anchor the inhibitory glycine receptor (GLYR) to subsynaptic microtubules. Acts as a major instructive molecule at inhibitory synapses, where it also clusters GABA type A receptors. In terms of biological role, also has a catalytic activity and catalyzes two steps in the biosynthesis of the molybdenum cofactor. In the first step, molybdopterin is adenylated. Subsequently, molybdate is inserted into adenylated molybdopterin and AMP is released. The sequence is that of Gephyrin (Gphn) from Mus musculus (Mouse).